Consider the following 363-residue polypeptide: Type-2 angiotensin II receptor (363 aa).

At 1-45 the chain is on the extracellular side; the sequence is MKDNFSFAATSRNITSSRPFDNLNATGTNESAFNCSHKPSDKHLE. N-linked (GlcNAc...) asparagine glycosylation is found at Asn4, Asn13, Asn24, Asn29, and Asn34. 2 disulfide bridges follow: Cys35–Cys290 and Cys117–Cys195. The helical transmembrane segment at 46–70 threads the bilayer; sequence AIPVLYYMIFVIGFAVNIVVVSLFC. At 71 to 80 the chain is on the cytoplasmic side; the sequence is CQKGPKKVSS. A helical membrane pass occupies residues 81–104; the sequence is IYIFNLALADLLLLATLPLWATYY. Angiotensin II contacts are provided by Tyr103 and Tyr104. The Extracellular portion of the chain corresponds to 105–114; that stretch reads SYRYDWLFGP. A helical membrane pass occupies residues 115–140; the sequence is VMCKVFGSFLTLNMFASIFFITCMSV. The Cytoplasmic segment spans residues 141–159; the sequence is DRYQSVIYPFLSQRRNPWQ. A helical transmembrane segment spans residues 160–181; it reads ASYVVPLVWCMACLSSLPTFYF. Angiotensin II is bound by residues Arg182, Tyr204, and Lys215. Residues 182 to 206 lie on the Extracellular side of the membrane; it reads RDVRTIEYLGVNACIMAFPPEKYAQ. A helical transmembrane segment spans residues 207-232; it reads WSAGIALMKNILGFIIPLIFIATCYF. Residues 233–257 are Cytoplasmic-facing; it reads GIRKHLLKTNSYGKNRITRDQVLKM. The helical transmembrane segment at 258-281 threads the bilayer; it reads AAAVVLAFIICWLPFHVLTFLDAL. Position 279 (Asp279) interacts with angiotensin II. Topologically, residues 282–294 are extracellular; it reads TWMGIINSCEVIA. The helical transmembrane segment at 295–320 threads the bilayer; sequence VIDLALPFAILLGFTNSCVNPFLYCF. Position 297 (Asp297) interacts with angiotensin II. Residues 321-363 are Cytoplasmic-facing; sequence VGNRFQQKLRSVFRVPITWLQGKRETMSCRKGSSLREMDTFVS. Positions 324-333 are helix VIII; sequence RFQQKLRSVF. At Ser354 the chain carries Phosphoserine; by PKC.

Belongs to the G-protein coupled receptor 1 family. In terms of assembly, interacts with MTUS1. As to expression, expressed at highest levels in adrenal gland and uterus.

It is found in the cell membrane. In terms of biological role, receptor for angiotensin II, a vasoconstricting peptide. Signals primarily via a non-canonical G-protein- and beta-arrestin independent pathways. Cooperates with MTUS1 to inhibit ERK2 activation and cell proliferation. The chain is Type-2 angiotensin II receptor from Mus musculus (Mouse).